The sequence spans 468 residues: 3-isopropylmalate dehydratase large subunit (468 aa).

3 residues coordinate [4Fe-4S] cluster: C349, C409, and C412.

This sequence belongs to the aconitase/IPM isomerase family. LeuC type 1 subfamily. As to quaternary structure, heterodimer of LeuC and LeuD. [4Fe-4S] cluster serves as cofactor.

It carries out the reaction (2R,3S)-3-isopropylmalate = (2S)-2-isopropylmalate. It functions in the pathway amino-acid biosynthesis; L-leucine biosynthesis; L-leucine from 3-methyl-2-oxobutanoate: step 2/4. Functionally, catalyzes the isomerization between 2-isopropylmalate and 3-isopropylmalate, via the formation of 2-isopropylmaleate. The sequence is that of 3-isopropylmalate dehydratase large subunit from Roseobacter denitrificans (strain ATCC 33942 / OCh 114) (Erythrobacter sp. (strain OCh 114)).